The following is a 421-amino-acid chain: UDP-N-acetylglucosamine 1-carboxyvinyltransferase 1 (421 aa).

Residue 22-23 (KN) participates in phosphoenolpyruvate binding. Arg95 is a UDP-N-acetyl-alpha-D-glucosamine binding site. Cys119 functions as the Proton donor in the catalytic mechanism. Cys119 carries the 2-(S-cysteinyl)pyruvic acid O-phosphothioketal modification. UDP-N-acetyl-alpha-D-glucosamine contacts are provided by residues 124 to 128 (RPIEQ), Asp308, and Val330.

This sequence belongs to the EPSP synthase family. MurA subfamily.

The protein resides in the cytoplasm. It catalyses the reaction phosphoenolpyruvate + UDP-N-acetyl-alpha-D-glucosamine = UDP-N-acetyl-3-O-(1-carboxyvinyl)-alpha-D-glucosamine + phosphate. Its pathway is cell wall biogenesis; peptidoglycan biosynthesis. In terms of biological role, cell wall formation. Adds enolpyruvyl to UDP-N-acetylglucosamine. The sequence is that of UDP-N-acetylglucosamine 1-carboxyvinyltransferase 1 from Staphylococcus epidermidis (strain ATCC 35984 / DSM 28319 / BCRC 17069 / CCUG 31568 / BM 3577 / RP62A).